Consider the following 553-residue polypeptide: Methyl-coenzyme M reductase subunit alpha (553 aa).

Residue Q151 coordinates coenzyme F430. Coenzyme B contacts are provided by residues R229, 260-261 (KH), and R274. Coenzyme M contacts are provided by Y336 and Y447.

This sequence belongs to the methyl-coenzyme M reductase alpha subunit family. As to quaternary structure, MCR is a hexamer of two alpha, two beta, and two gamma chains, forming a dimer of heterotrimers. It depends on coenzyme F430 as a cofactor.

It is found in the cytoplasm. It carries out the reaction coenzyme B + methyl-coenzyme M = methane + coenzyme M-coenzyme B heterodisulfide. It functions in the pathway one-carbon metabolism; methyl-coenzyme M reduction; methane from methyl-coenzyme M: step 1/1. Its function is as follows. Component of the methyl-coenzyme M reductase (MCR) I that catalyzes the reductive cleavage of methyl-coenzyme M (CoM-S-CH3 or 2-(methylthio)ethanesulfonate) using coenzyme B (CoB or 7-mercaptoheptanoylthreonine phosphate) as reductant which results in the production of methane and the mixed heterodisulfide of CoB and CoM (CoM-S-S-CoB). This is the final step in methanogenesis. The sequence is that of Methyl-coenzyme M reductase subunit alpha (mcrA) from Methanococcus vannielii.